We begin with the raw amino-acid sequence, 126 residues long: Aspartate 1-decarboxylase (126 aa).

Ser-25 (schiff-base intermediate with substrate; via pyruvic acid) is an active-site residue. Ser-25 is subject to Pyruvic acid (Ser). Thr-57 provides a ligand contact to substrate. The Proton donor role is filled by Tyr-58. Residue 73–75 (GAA) coordinates substrate.

Belongs to the PanD family. As to quaternary structure, heterooctamer of four alpha and four beta subunits. Pyruvate serves as cofactor. Post-translationally, is synthesized initially as an inactive proenzyme, which is activated by self-cleavage at a specific serine bond to produce a beta-subunit with a hydroxyl group at its C-terminus and an alpha-subunit with a pyruvoyl group at its N-terminus.

The protein resides in the cytoplasm. The catalysed reaction is L-aspartate + H(+) = beta-alanine + CO2. It functions in the pathway cofactor biosynthesis; (R)-pantothenate biosynthesis; beta-alanine from L-aspartate: step 1/1. Catalyzes the pyruvoyl-dependent decarboxylation of aspartate to produce beta-alanine. This is Aspartate 1-decarboxylase from Methylococcus capsulatus (strain ATCC 33009 / NCIMB 11132 / Bath).